A 47-amino-acid polypeptide reads, in one-letter code: Ruminococcin-A (47 aa).

The signal sequence occupies residues 1–23 (MRNDVLTLTNPMEENELEQILGG). A 2,3-didehydrobutyrine mark is found at threonine 30 and threonine 39. The segment at residues 30 to 35 (TISHEC) is a cross-link (beta-methyllanthionine (Thr-Cys)). The lanthionine (Ser-Cys) cross-link spans 32–46 (SHECNMNTWQFLFTC). A cross-link (beta-methyllanthionine (Thr-Cys)) is located at residues 45 to 47 (TCC).

This sequence belongs to the type A lantibiotic family. Post-translationally, maturation of lantibiotics involves the enzymatic conversion of Thr, and Ser into dehydrated AA and the formation of thioether bonds with cysteine. This is followed by membrane translocation and cleavage of the modified precursor.

It is found in the secreted. In terms of biological role, lanthionine-containing peptide antibiotic (lantibiotic) active on Gram-positive bacteria. The bactericidal activity of lantibiotics is based on depolarization of energized bacterial cytoplasmic membranes, initiated by the formation of aqueous transmembrane pores. Ruminococcin A is a broad spectrum bacteriocin exhibiting activity against a wide range of pathogenic clostridia and B.longum. The polypeptide is Ruminococcin-A (rumA1) (Blautia hansenii (Ruminococcus hansenii)).